A 372-amino-acid polypeptide reads, in one-letter code: MAWTKYQLFLAGLMLVTGSINTLSAKWADNFEAEGCGGSQEHSFKHPFVQAVGMFLGEFSCLAAFYLLKCRARRQSDSSVEPRQPFNALLFLPPALCDMTGTSIMYVALNMTSASSFQMLRGAVIIFTGLFSVAFLDRRLVPSQWLGILITIAGLVVVGLADLLSKHDSQHKLSEVITGDLLIIMAQIIIAIQMVLEEKFVYKHNIHPLQAVGIEGFFGFVILSLLLVPMYYIPTASFSGNPRGVLEDALDAFCQVGRQPLIALALLGNISSIAFFNFSGISVTKELSATTRMVLDTLRTVVIWAFTLALGWEVFHPLQILGFLILLMGTALYNGLHRPLLACLSRRWRHPTQEGEQERLLGDSRTPINETS.

The first 18 residues, 1 to 18 (MAWTKYQLFLAGLMLVTG), serve as a signal peptide directing secretion. A run of 2 helical transmembrane segments spans residues 48 to 68 (FVQA…FYLL) and 89 to 109 (LLFL…YVAL). One can recognise an EamA domain in the interval 105–160 (MYVALNMTSASSFQMLRGAVIIFTGLFSVAFLDRRLVPSQWLGILITIAGLVVVGL). Asn110 carries an N-linked (GlcNAc...) asparagine glycan. 7 helical membrane passes run 116-136 (SFQM…VAFL), 145-165 (WLGI…DLLS), 176-196 (VITG…QMVL), 211-231 (AVGI…VPMY), 261-281 (LIAL…FSGI), 293-312 (MVLD…ALGW), and 320-336 (ILGF…YNGL). Position 366 is a phosphothreonine (Thr366).

This sequence belongs to the SLC35F solute transporter family. As to quaternary structure, interacts with SLC25A5.

The protein localises to the mitochondrion. It is found in the lysosome membrane. In terms of biological role, involved in the maintenance of mitochondrial membrane potential in pancreatic ductal adenocarcinoma (PDAC) cells. Promotes pancreatic ductal adenocarcinoma (PDAC) cell growth. May play a role as a nucleotide-sugar transporter. This chain is Solute carrier family 35 member F6 (Slc35f6), found in Rattus norvegicus (Rat).